The sequence spans 176 residues: Magnetosome protein MamT (176 aa).

At 1-11 (MSMEAPRRGRR) the chain is on the cytoplasmic side. Residues 12–30 (WVSLGMIALLAAIGLGLYW) traverse the membrane as a helical segment. Residues 31 to 176 (DQLSTPSGIT…DKKGGMRWQL (146 aa)) lie on the Lumenal side of the membrane. The short motif at 89 to 109 (VKPGTGMPHPYVGDCIQCHLM) is the MCR (magnetochrome) 1 element. Heme-binding residues include C103, C106, H107, C154, C157, and H158. Residues 140–160 (ILPTSRQPHPPAGRCIKCHDI) carry the MCR 2 motif.

Belongs to the magnetosome MamT family. Requires heme as cofactor.

The protein localises to the magnetosome membrane. Functionally, may play a role in magnetite crystal maturation. May transfer electrons to balance the Fe(2+)-Fe(3+) ratio during magnetite formation. This is Magnetosome protein MamT (mamT) from Paramagnetospirillum magneticum (strain ATCC 700264 / AMB-1) (Magnetospirillum magneticum).